Here is a 377-residue protein sequence, read N- to C-terminus: MSEVFDLTCDLISRPSVTPEDAGCQAMIAARLERVGFTCEHLHYGSVANLWATHGQGAPVLVLLGHTDVVPPGPIEAWTSNPFIPQRREGKLYGRGAADMKGSVAAFVIAAERFLVAHPGHPGTLAILLTSDEEGQAIDGVRKVAETLRQRGQRIDWCLTGEPSSSERLGDLLRVGRRGSLSATLHVKGVQGHVAYPHQARNPIHLAVPALAALTGRHWDDGDESFPSTSLQISNIHAGTGANNVIPGALEVAFNLRYNPHWSAPRLESEIVALLDQHGLDYTLHWHRSGEPFYTPEGKLRRIAREVLERFSGAPPEESTGGGTSDARFIAPLGAQCIEVGPVNASIHQVDEHVCLADLEALPDLYQLLIERLLAEH.

Residue His-66 coordinates Zn(2+). The active site involves Asp-68. Asp-99 is a binding site for Zn(2+). Catalysis depends on Glu-133, which acts as the Proton acceptor. Zn(2+)-binding residues include Glu-134, Glu-162, and His-348.

Belongs to the peptidase M20A family. DapE subfamily. As to quaternary structure, homodimer. It depends on Zn(2+) as a cofactor. The cofactor is Co(2+).

The enzyme catalyses N-succinyl-(2S,6S)-2,6-diaminopimelate + H2O = (2S,6S)-2,6-diaminopimelate + succinate. It functions in the pathway amino-acid biosynthesis; L-lysine biosynthesis via DAP pathway; LL-2,6-diaminopimelate from (S)-tetrahydrodipicolinate (succinylase route): step 3/3. Its function is as follows. Catalyzes the hydrolysis of N-succinyl-L,L-diaminopimelic acid (SDAP), forming succinate and LL-2,6-diaminopimelate (DAP), an intermediate involved in the bacterial biosynthesis of lysine and meso-diaminopimelic acid, an essential component of bacterial cell walls. This Xylella fastidiosa (strain M12) protein is Succinyl-diaminopimelate desuccinylase.